Consider the following 352-residue polypeptide: Photosystem II D2 protein (352 aa).

Residue threonine 2 is modified to N-acetylthreonine. Threonine 2 is subject to Phosphothreonine. The helical transmembrane segment at 40–60 threads the bilayer; it reads CAYFALGGWLTGTTFVSSWYT. Histidine 117 is a binding site for chlorophyll a. The chain crosses the membrane as a helical span at residues 124 to 140; it reads GFMLRQFEIARAVQIRP. Pheophytin a-binding residues include glutamine 129 and asparagine 142. Residues 152–165 form a helical membrane-spanning segment; sequence VFVSVFLIYPLGQS. Residue histidine 197 coordinates chlorophyll a. A helical membrane pass occupies residues 207–227; sequence AALLCAIHGATVENTLFEDGD. Residues histidine 214 and phenylalanine 261 each coordinate a plastoquinone. Residue histidine 214 coordinates Fe cation. Position 268 (histidine 268) interacts with Fe cation. The helical transmembrane segment at 278–294 threads the bilayer; it reads GLWMSALGVVGLALNLR.

The protein belongs to the reaction center PufL/M/PsbA/D family. PSII is composed of 1 copy each of membrane proteins PsbA, PsbB, PsbC, PsbD, PsbE, PsbF, PsbH, PsbI, PsbJ, PsbK, PsbL, PsbM, PsbT, PsbX, PsbY, PsbZ, Psb30/Ycf12, at least 3 peripheral proteins of the oxygen-evolving complex and a large number of cofactors. It forms dimeric complexes. Requires The D1/D2 heterodimer binds P680, chlorophylls that are the primary electron donor of PSII, and subsequent electron acceptors. It shares a non-heme iron and each subunit binds pheophytin, quinone, additional chlorophylls, carotenoids and lipids. There is also a Cl(-1) ion associated with D1 and D2, which is required for oxygen evolution. The PSII complex binds additional chlorophylls, carotenoids and specific lipids. as cofactor.

It is found in the plastid. Its subcellular location is the chloroplast thylakoid membrane. It carries out the reaction 2 a plastoquinone + 4 hnu + 2 H2O = 2 a plastoquinol + O2. In terms of biological role, photosystem II (PSII) is a light-driven water:plastoquinone oxidoreductase that uses light energy to abstract electrons from H(2)O, generating O(2) and a proton gradient subsequently used for ATP formation. It consists of a core antenna complex that captures photons, and an electron transfer chain that converts photonic excitation into a charge separation. The D1/D2 (PsbA/PsbD) reaction center heterodimer binds P680, the primary electron donor of PSII as well as several subsequent electron acceptors. D2 is needed for assembly of a stable PSII complex. The protein is Photosystem II D2 protein of Ostreococcus tauri.